Reading from the N-terminus, the 193-residue chain is ATP-dependent Clp protease proteolytic subunit (193 aa).

Residue S98 is the Nucleophile of the active site. Residue H123 is part of the active site.

It belongs to the peptidase S14 family. As to quaternary structure, fourteen ClpP subunits assemble into 2 heptameric rings which stack back to back to give a disk-like structure with a central cavity, resembling the structure of eukaryotic proteasomes.

Its subcellular location is the cytoplasm. It carries out the reaction Hydrolysis of proteins to small peptides in the presence of ATP and magnesium. alpha-casein is the usual test substrate. In the absence of ATP, only oligopeptides shorter than five residues are hydrolyzed (such as succinyl-Leu-Tyr-|-NHMec, and Leu-Tyr-Leu-|-Tyr-Trp, in which cleavage of the -Tyr-|-Leu- and -Tyr-|-Trp bonds also occurs).. Its function is as follows. Cleaves peptides in various proteins in a process that requires ATP hydrolysis. Has a chymotrypsin-like activity. Plays a major role in the degradation of misfolded proteins. This Lachnospira eligens (strain ATCC 27750 / DSM 3376 / VPI C15-48 / C15-B4) (Eubacterium eligens) protein is ATP-dependent Clp protease proteolytic subunit.